The sequence spans 392 residues: S-adenosylmethionine synthase (392 aa).

Residue H22 coordinates ATP. D24 contacts Mg(2+). Position 50 (E50) interacts with K(+). Residues E63 and Q106 each contribute to the L-methionine site. The flexible loop stretch occupies residues 106–116 (QSPDITQGVTL). Residues 170–172 (DGK), 236–237 (KF), D245, 251–252 (RK), A268, and K272 contribute to the ATP site. D245 serves as a coordination point for L-methionine. Residue K276 coordinates L-methionine.

It belongs to the AdoMet synthase family. As to quaternary structure, homotetramer; dimer of dimers. It depends on Mg(2+) as a cofactor. K(+) is required as a cofactor.

It is found in the cytoplasm. It carries out the reaction L-methionine + ATP + H2O = S-adenosyl-L-methionine + phosphate + diphosphate. Its pathway is amino-acid biosynthesis; S-adenosyl-L-methionine biosynthesis; S-adenosyl-L-methionine from L-methionine: step 1/1. Functionally, catalyzes the formation of S-adenosylmethionine (AdoMet) from methionine and ATP. The overall synthetic reaction is composed of two sequential steps, AdoMet formation and the subsequent tripolyphosphate hydrolysis which occurs prior to release of AdoMet from the enzyme. This is S-adenosylmethionine synthase from Sulfurimonas denitrificans (strain ATCC 33889 / DSM 1251) (Thiomicrospira denitrificans (strain ATCC 33889 / DSM 1251)).